Consider the following 203-residue polypeptide: Secreted phosphoprotein 24 (203 aa).

An N-terminal signal peptide occupies residues 1-23; it reads MELATMKTLVMLVLGMHYWCASG. 2 cysteine pairs are disulfide-bonded: Cys-86-Cys-96 and Cys-109-Cys-127. Residue Ser-90 is modified to Phosphoserine. Phosphoserine occurs at positions 137, 138, and 174.

This sequence belongs to the SPP2 family. Multiply phosphorylated at serine residues. Post-translationally, phosphorylation sites are present in the extracellular medium.

It is found in the secreted. Functionally, could coordinate an aspect of bone turnover. In Rattus norvegicus (Rat), this protein is Secreted phosphoprotein 24 (Spp2).